A 697-amino-acid polypeptide reads, in one-letter code: Elongation factor G (697 aa).

The tr-type G domain maps to 10–285 (AKTRNIGIMA…GVIDYLPSPL (276 aa)). Residues 19–26 (AHIDAGKT), 83–87 (DTPGH), and 137–140 (NKMD) each bind GTP.

The protein belongs to the TRAFAC class translation factor GTPase superfamily. Classic translation factor GTPase family. EF-G/EF-2 subfamily.

It is found in the cytoplasm. Its function is as follows. Catalyzes the GTP-dependent ribosomal translocation step during translation elongation. During this step, the ribosome changes from the pre-translocational (PRE) to the post-translocational (POST) state as the newly formed A-site-bound peptidyl-tRNA and P-site-bound deacylated tRNA move to the P and E sites, respectively. Catalyzes the coordinated movement of the two tRNA molecules, the mRNA and conformational changes in the ribosome. The polypeptide is Elongation factor G (Lactobacillus acidophilus (strain ATCC 700396 / NCK56 / N2 / NCFM)).